We begin with the raw amino-acid sequence, 786 residues long: LPS-assembly protein LptD (786 aa).

The first 39 residues, 1-39, serve as a signal peptide directing secretion; it reads MPPKPLFPNVFPGDGAPRKRRLALALLAVPGLVPAVSYA. Residues 767–786 are disordered; the sequence is PGYTPLPPPPPPMSRFSNYE. The segment covering 770-779 has biased composition (pro residues); sequence TPLPPPPPPM.

This sequence belongs to the LptD family. As to quaternary structure, component of the lipopolysaccharide transport and assembly complex. Interacts with LptE and LptA.

It is found in the cell outer membrane. Together with LptE, is involved in the assembly of lipopolysaccharide (LPS) at the surface of the outer membrane. The sequence is that of LPS-assembly protein LptD from Burkholderia lata (strain ATCC 17760 / DSM 23089 / LMG 22485 / NCIMB 9086 / R18194 / 383).